The primary structure comprises 212 residues: Large ribosomal subunit protein bL25 (212 aa).

Residues 179-212 are disordered; it reads EPEEEELPEDDEAAAEGEDAAAGEEAEAPAESED.

The protein belongs to the bacterial ribosomal protein bL25 family. CTC subfamily. Part of the 50S ribosomal subunit; part of the 5S rRNA/L5/L18/L25 subcomplex. Contacts the 5S rRNA. Binds to the 5S rRNA independently of L5 and L18.

Functionally, this is one of the proteins that binds to the 5S RNA in the ribosome where it forms part of the central protuberance. This Corynebacterium urealyticum (strain ATCC 43042 / DSM 7109) protein is Large ribosomal subunit protein bL25.